A 94-amino-acid polypeptide reads, in one-letter code: Acylphosphatase (94 aa).

Residues alanine 7–alanine 94 enclose the Acylphosphatase-like domain. Active-site residues include arginine 22 and asparagine 40.

This sequence belongs to the acylphosphatase family.

The catalysed reaction is an acyl phosphate + H2O = a carboxylate + phosphate + H(+). The chain is Acylphosphatase (acyP) from Mesorhizobium japonicum (strain LMG 29417 / CECT 9101 / MAFF 303099) (Mesorhizobium loti (strain MAFF 303099)).